The following is a 20-amino-acid chain: Protein PR-L3 (20 aa).

This sequence belongs to the BetVI family.

This Lupinus luteus (European yellow lupine) protein is Protein PR-L3.